The primary structure comprises 921 residues: Isoleucine--tRNA ligase (921 aa).

The short motif at 57-67 (PYANGELHMGH) is the 'HIGH' region element. Position 552 (Glu552) interacts with L-isoleucyl-5'-AMP. Positions 593-597 (KMSKS) match the 'KMSKS' region motif. An ATP-binding site is contributed by Lys596. Residues Cys888, Cys891, Cys908, and Cys911 each contribute to the Zn(2+) site.

Belongs to the class-I aminoacyl-tRNA synthetase family. IleS type 1 subfamily. Monomer. Zn(2+) serves as cofactor.

It localises to the cytoplasm. The catalysed reaction is tRNA(Ile) + L-isoleucine + ATP = L-isoleucyl-tRNA(Ile) + AMP + diphosphate. Its function is as follows. Catalyzes the attachment of isoleucine to tRNA(Ile). As IleRS can inadvertently accommodate and process structurally similar amino acids such as valine, to avoid such errors it has two additional distinct tRNA(Ile)-dependent editing activities. One activity is designated as 'pretransfer' editing and involves the hydrolysis of activated Val-AMP. The other activity is designated 'posttransfer' editing and involves deacylation of mischarged Val-tRNA(Ile). The polypeptide is Isoleucine--tRNA ligase (Listeria welshimeri serovar 6b (strain ATCC 35897 / DSM 20650 / CCUG 15529 / CIP 8149 / NCTC 11857 / SLCC 5334 / V8)).